Reading from the N-terminus, the 276-residue chain is Shikimate dehydrogenase (NADP(+)) (276 aa).

Residues 18–20 (SKS) and Thr65 each bind shikimate. The active-site Proton acceptor is the Lys69. An NADP(+)-binding site is contributed by Glu81. The shikimate site is built by Asn90 and Asp106. Residues 130–134 (GAGGA), 154–159 (NRTSSK), and Met217 contribute to the NADP(+) site. Tyr219 is a binding site for shikimate. Gly241 contacts NADP(+).

The protein belongs to the shikimate dehydrogenase family. In terms of assembly, homodimer.

The enzyme catalyses shikimate + NADP(+) = 3-dehydroshikimate + NADPH + H(+). It participates in metabolic intermediate biosynthesis; chorismate biosynthesis; chorismate from D-erythrose 4-phosphate and phosphoenolpyruvate: step 4/7. Involved in the biosynthesis of the chorismate, which leads to the biosynthesis of aromatic amino acids. Catalyzes the reversible NADPH linked reduction of 3-dehydroshikimate (DHSA) to yield shikimate (SA). This Vibrio atlanticus (strain LGP32) (Vibrio splendidus (strain Mel32)) protein is Shikimate dehydrogenase (NADP(+)).